The sequence spans 2204 residues: Non-reducing polyketide synthase CTB1 (2204 aa).

The N-terminal acylcarrier protein transacylase domain (SAT) stretch occupies residues Ala-11–His-250. One can recognise a Ketosynthase family 3 (KS3) domain in the interval Lys-382–Asp-815. Residues Cys-554, His-689, and His-734 each act as for beta-ketoacyl synthase activity in the active site. Positions Ala-923–Lys-1224 are malonyl-CoA:ACP transacylase (MAT) domain. Residues Ser-1299–Val-1619 are product template (PT) domain. The interval His-1303–Lys-1439 is N-terminal hotdog fold. One can recognise a PKS/mFAS DH domain in the interval His-1303–His-1616. The active-site Proton acceptor; for dehydratase activity is the His-1336. A C-terminal hotdog fold region spans residues Thr-1468–His-1616. The Proton donor; for dehydratase activity role is filled by Asp-1528. Positions Lys-1625 to Lys-1674 are disordered. Basic and acidic residues predominate over residues Thr-1631–Ala-1644. Carrier domains are found at residues Pro-1679–Ser-1756 and Asp-1783–Thr-1865. 2 positions are modified to O-(pantetheine 4'-phosphoryl)serine: Ser-1716 and Ser-1824. Positions Ser-1864 to Pro-1875 are enriched in polar residues. A disordered region spans residues Ser-1864–Trp-1931. A compositionally biased stretch (low complexity) spans Ala-1880–Ser-1895. The tract at residues Ile-1945–Met-2195 is thioesterase (TE) domain.

Pantetheine 4'-phosphate is required as a cofactor.

The enzyme catalyses 6 malonyl-CoA + acetyl-CoA + 6 H(+) = nor-toralactone + 6 CO2 + 7 CoA + 2 H2O. Its pathway is mycotoxin biosynthesis. In terms of biological role, polyketide synthase; part of the gene cluster that mediates the biosynthesis of cercosporin, a light-activated, non-host-selective toxin. The perylenequinone chromophore of cercosporin absorbs light energy to attain an electronically-activated triplet state and produces active oxygen species such as the hydroxyl radical, superoxide, hydrogen peroxide or singlet oxygen upon reaction with oxygen molecules. These reactive oxygen species cause damage to various cellular components including lipids, proteins and nucleic acids. The first step of cercosporin biosynthesis is performed by the polyketide synthase CTB1 which catalyzes the formation of nor-toralactone. The starter unit acyltransferase (SAT) domain of CTB1 initiates polyketide extension by the selective utilization of acetyl-CoA, which is elongated to the heptaketide in the beta-ketoacyl synthase (KS) domain by successive condensations with six malonyl units introduced by the malonyl acyltransferase (MAT) domain. The product template (PT) domain catalyzes C4-C9 and C2-C11 aldol cyclizations and dehydrations to a trihydroxynaphthalene, which is thought to be delivered to the thioesterase (TE) domain for product release. The bifunctional enzyme CTB3 then methylates nor-toralactone to toralactone before conducting an unusual oxidative aromatic ring opening. The O-methyltransferase CTB2 further methylates the nascent OH-6 of the CBT3 product, blocking further oxidation at this site before the reductase CTB6 reduces the 2-oxopropyl ketone at position C7, giving naphthalene. The FAD-dependent monooxygenase CTB5 in concert with the multicopper oxidase CTB12 are responsible for homodimerization of naphthalene with CTB7 installing the dioxepine moiety, finally producing cercosporin. The fasciclin domain-containing protein CTB11 might act with CTB5 and CTB12 whereas the roles of CTB9 and CTB10 have still to be elucidated. The polypeptide is Non-reducing polyketide synthase CTB1 (Cercospora beticola (Sugarbeet leaf spot fungus)).